The following is a 262-amino-acid chain: Dihydroorotate dehydrogenase B (NAD(+)), electron transfer subunit (262 aa).

In terms of domain architecture, FAD-binding FR-type spans 3–104 (QLQEMMTVVS…MGPLGNGFPV (102 aa)). FAD is bound by residues 53–56 (RPIS), 70–72 (LYR), and 79–80 (GT). The [2Fe-2S] cluster site is built by Cys226, Cys231, Cys234, and Cys249.

Belongs to the PyrK family. In terms of assembly, heterotetramer of 2 PyrK and 2 PyrD type B subunits. It depends on [2Fe-2S] cluster as a cofactor. Requires FAD as cofactor.

Its pathway is pyrimidine metabolism; UMP biosynthesis via de novo pathway; orotate from (S)-dihydroorotate (NAD(+) route): step 1/1. Functionally, responsible for channeling the electrons from the oxidation of dihydroorotate from the FMN redox center in the PyrD type B subunit to the ultimate electron acceptor NAD(+). The sequence is that of Dihydroorotate dehydrogenase B (NAD(+)), electron transfer subunit from Lactococcus lactis subsp. cremoris (strain SK11).